The chain runs to 203 residues: 8-oxoguanine DNA glycosylase/AP lyase (203 aa).

Catalysis depends on residues Lys128 and Asp146.

It belongs to the type-2 OGG1 family.

It carries out the reaction 2'-deoxyribonucleotide-(2'-deoxyribose 5'-phosphate)-2'-deoxyribonucleotide-DNA = a 3'-end 2'-deoxyribonucleotide-(2,3-dehydro-2,3-deoxyribose 5'-phosphate)-DNA + a 5'-end 5'-phospho-2'-deoxyribonucleoside-DNA + H(+). Catalyzes the excision of an oxidatively damaged form of guanine (7,8-dihydro-8-oxoguanine = 8-oxoG) from DNA. Also cleaves the DNA backbone at apurinic/apyrimidinic sites (AP sites). The chain is 8-oxoguanine DNA glycosylase/AP lyase from Sulfolobus acidocaldarius (strain ATCC 33909 / DSM 639 / JCM 8929 / NBRC 15157 / NCIMB 11770).